The chain runs to 418 residues: L-glutamine:2-deoxy-scyllo-inosose aminotransferase (418 aa).

Residue Lys192 is modified to N6-(pyridoxal phosphate)lysine.

The protein belongs to the DegT/DnrJ/EryC1 family. L-glutamine:2-deoxy-scyllo-inosose/scyllo-inosose aminotransferase subfamily. Pyridoxal 5'-phosphate is required as a cofactor.

It carries out the reaction 2-deoxy-L-scyllo-inosose + L-glutamine = 2-deoxy-scyllo-inosamine + 2-oxoglutaramate. The enzyme catalyses 3-amino-2,3-dideoxy-scyllo-inosose + L-glutamine = 2-deoxystreptamine + 2-oxoglutaramate. The protein operates within metabolic intermediate biosynthesis; 2-deoxystreptamine biosynthesis; 2-deoxystreptamine from D-glucose 6-phosphate: step 2/4. It participates in metabolic intermediate biosynthesis; 2-deoxystreptamine biosynthesis; 2-deoxystreptamine from D-glucose 6-phosphate: step 4/4. It functions in the pathway antibiotic biosynthesis; butirosin biosynthesis. Catalyzes the PLP-dependent transamination of 2-deoxy-scyllo-inosose (2-DOI) to form 2-deoxy-scyllo-inosamine (2-DOIA) using L-glutamine as the amino donor. Also catalyzes the transamination of 3-amino-2,3-dideoxy-scyllo-inosose (keto-2-DOIA) into 2-deoxystreptamine (2-DOS). The chain is L-glutamine:2-deoxy-scyllo-inosose aminotransferase (btrR) from Niallia circulans (Bacillus circulans).